The sequence spans 269 residues: Expansin-B9 (269 aa).

The signal sequence occupies residues 1–24 (MGSLANNIMVVGAVLAALVVGGSC). N34 is a glycosylation site (N-linked (GlcNAc...) asparagine). An Expansin-like EG45 domain is found at 63–169 (GGACGIKNVN…RRVRCKYPAG (107 aa)). 3 cysteine pairs are disulfide-bonded: C66–C94, C97–C164, and C102–C108. The 82-residue stretch at 183–264 (NYVAVLVKFV…NWRPDAVYTS (82 aa)) folds into the Expansin-like CBD domain.

It belongs to the expansin family. Expansin B subfamily. In terms of tissue distribution, expressed in anthers and pollen.

It localises to the secreted. Its subcellular location is the cell wall. The protein resides in the membrane. May aid fertilization by loosening the cell wall of the stigma and style, thereby facilitating penetration of the pollen tube. Acts selectively on grass cell walls, which are relatively poor in pectins and xyloglucans and rich in glucuronoarabinoxylans and (1-3),(1-4)-beta-D-glucans, when compared with cell walls of other angiosperms, including other monocots. This chain is Expansin-B9 (EXPB9), found in Zea mays (Maize).